Here is a 699-residue protein sequence, read N- to C-terminus: Cell pattern formation-associated protein StuA (699 aa).

Disordered stretches follow at residues 1 to 20 and 31 to 97; these read MDGT…LLAP and TPQF…QPEH. Low complexity predominate over residues 32-49; sequence PQFKSQQSQPQSQSQYPS. The segment covering 52 to 61 has biased composition (polar residues); sequence NPDSYSSSSP. Positions 75-84 are enriched in acidic residues; that stretch reads EDGEDYDQEE. The region spanning 226 to 332 is the HTH APSES-type domain; sequence RVTATLWEDE…HNIGALLYHP (107 aa). Positions 260–281 form a DNA-binding region, H-T-H motif; that stretch reads GTKLLNVAGMTRGRRDGILKSE. 3 disordered regions span residues 372-594, 599-618, and 674-699; these read AMPT…MNSM, RRDD…DLNN, and PSYP…QSFG. Residues 376 to 423 show a composition bias toward polar residues; it reads GYTSQQPLTNGHQSMANTPQPLTNGSQPPMNGSQTPMNGPQPPMQNGG. Basic and acidic residues-rich tracts occupy residues 428–438 and 478–491; these read RVREDDDDLHR and GLKR…DMHR. Positions 520 to 529 are enriched in polar residues; it reads NLHQPLSNGD. The segment covering 535 to 545 has biased composition (basic and acidic residues); that stretch reads RGRDDDDDVHR. Positions 566-594 are enriched in polar residues; that stretch reads TSTSNDMLPQSPYYTLSNGAYQGPMMNSM. A nuclear localization domain region spans residues 669 to 695; sequence TVAVSPSYPAGPGYELARPVTNVPRRQ.

Belongs to the EFG1/PHD1/stuA family.

Its subcellular location is the nucleus. Functionally, transcription factor that regulates asexual reproduction. Binds the StuA-response elements (StRE) with the consensus sequence 5'-(A/T)CGCG(T/A)N(A/C)-3' at the promoters of target genes. Controls the expression of the gene clusters involved in the production of deoxynivalenol (DON) and 15-acetyldeoxynivalenol (15ADON). Regulates the expression of genes involved in chitin and glucan metabolism. Also controls catalase activity and cell surface hydrophobicity. Plays an important role in pathogenicity. This is Cell pattern formation-associated protein StuA from Gibberella zeae (strain ATCC MYA-4620 / CBS 123657 / FGSC 9075 / NRRL 31084 / PH-1) (Wheat head blight fungus).